The primary structure comprises 359 residues: DNA polymerase IV (359 aa).

The region spanning 4–185 (IIHVDMDCFF…LALIKIPGVG (182 aa)) is the UmuC domain. Residues Asp-8 and Asp-103 each coordinate Mg(2+). Glu-104 is an active-site residue.

Belongs to the DNA polymerase type-Y family. As to quaternary structure, monomer. Mg(2+) is required as a cofactor.

The protein localises to the cytoplasm. It catalyses the reaction DNA(n) + a 2'-deoxyribonucleoside 5'-triphosphate = DNA(n+1) + diphosphate. Functionally, poorly processive, error-prone DNA polymerase involved in untargeted mutagenesis. Copies undamaged DNA at stalled replication forks, which arise in vivo from mismatched or misaligned primer ends. These misaligned primers can be extended by PolIV. Exhibits no 3'-5' exonuclease (proofreading) activity. May be involved in translesional synthesis, in conjunction with the beta clamp from PolIII. This chain is DNA polymerase IV, found in Shewanella loihica (strain ATCC BAA-1088 / PV-4).